The chain runs to 430 residues: Histidinol dehydrogenase (430 aa).

NAD(+) contacts are provided by Tyr-130, Gln-191, and Asn-214. Positions 237, 259, and 262 each coordinate substrate. The Zn(2+) site is built by Gln-259 and His-262. Catalysis depends on proton acceptor residues Glu-327 and His-328. Positions 328, 361, 415, and 420 each coordinate substrate. Asp-361 provides a ligand contact to Zn(2+). His-420 is a Zn(2+) binding site.

This sequence belongs to the histidinol dehydrogenase family. Zn(2+) is required as a cofactor.

The enzyme catalyses L-histidinol + 2 NAD(+) + H2O = L-histidine + 2 NADH + 3 H(+). Its pathway is amino-acid biosynthesis; L-histidine biosynthesis; L-histidine from 5-phospho-alpha-D-ribose 1-diphosphate: step 9/9. Functionally, catalyzes the sequential NAD-dependent oxidations of L-histidinol to L-histidinaldehyde and then to L-histidine. This chain is Histidinol dehydrogenase, found in Brucella suis biovar 1 (strain 1330).